A 682-amino-acid chain; its full sequence is Potassium-transporting ATPase ATP-binding subunit (682 aa).

Helical transmembrane passes span 34–54, 62–82, 219–239, and 254–274; these read PVMF…IAMA, ALFS…ANFA, IALT…TATL, and VLVA…LSAI. Residue Asp-307 is the 4-aspartylphosphate intermediate of the active site. Residues Asp-344, Glu-348, 377–384, and Lys-395 contribute to the ATP site; that span reads FTAQSRMS. Mg(2+) is bound by residues Asp-518 and Asp-522. 3 consecutive transmembrane segments (helical) span residues 588 to 608, 616 to 636, and 656 to 676; these read FAII…LNIM, AILS…PLAL, and IYGL…DLLL.

Belongs to the cation transport ATPase (P-type) (TC 3.A.3) family. Type IA subfamily. In terms of assembly, the system is composed of three essential subunits: KdpA, KdpB and KdpC.

It localises to the cell inner membrane. The catalysed reaction is K(+)(out) + ATP + H2O = K(+)(in) + ADP + phosphate + H(+). Its function is as follows. Part of the high-affinity ATP-driven potassium transport (or Kdp) system, which catalyzes the hydrolysis of ATP coupled with the electrogenic transport of potassium into the cytoplasm. This subunit is responsible for energy coupling to the transport system and for the release of the potassium ions to the cytoplasm. The sequence is that of Potassium-transporting ATPase ATP-binding subunit from Escherichia coli (strain K12 / MC4100 / BW2952).